Consider the following 74-residue polypeptide: U4-theraphotoxin-Cg1a (74 aa).

A signal peptide spans 1-19 (MNATIFAFLLLLNLAMHNA). A propeptide spanning residues 20 to 39 (TEQSSETDMDDTLLIPEINR) is cleaved from the precursor. Cystine bridges form between Cys42/Cys56, Cys49/Cys61, and Cys55/Cys71.

The protein belongs to the neurotoxin 36 family. 01 subfamily. In terms of tissue distribution, expressed by the venom gland.

It localises to the secreted. Probable ion channel inhibitor. In Chilobrachys guangxiensis (Chinese earth tiger tarantula), this protein is U4-theraphotoxin-Cg1a.